A 529-amino-acid chain; its full sequence is Protein FLOURY ENDOSPERM 6, chloroplastic (529 aa).

Disordered regions lie at residues 1–22 (MLPL…PTLT), 39–77 (AAPH…NAAR), and 166–275 (QGAV…HNKS). Residues 1–71 (MLPLLLPLPV…QTRAPRRTLS (71 aa)) constitute a chloroplast transit peptide. Residues 9–18 (PVTPPPPLPS) show a composition bias toward pro residues. Residues 41–57 (PHHHHHHRRRRVYRRQR) show a composition bias toward basic residues. A coiled-coil region spans residues 400–452 (VMQAQEELRSIRAKIAVLEGKMALEIIEKNKIIEEKQRRLDEAEKALSELRTV).

In terms of assembly, interacts with SKIPA. Interacts with ISA1. As to expression, expressed in leaves, stems and panicles. Expressed at lower levels in roots and developing seeds.

The protein resides in the plastid. It localises to the chloroplast. In terms of biological role, involved in compound starch granule formation and starch synthesis in endosperm. May act as a regulatory scaffolding protein and affect starch synthesis and compound starch granule formation through direct interaction with isoamylase 1 (ISA1). Binds starch, amylopectin and amylose through its C-terminal carbohydrate-binding domain (CBM) in vitro. This chain is Protein FLOURY ENDOSPERM 6, chloroplastic, found in Oryza sativa subsp. japonica (Rice).